Here is a 305-residue protein sequence, read N- to C-terminus: tRNA pseudouridine synthase B (305 aa).

The active-site Nucleophile is aspartate 39.

This sequence belongs to the pseudouridine synthase TruB family. Type 1 subfamily.

It catalyses the reaction uridine(55) in tRNA = pseudouridine(55) in tRNA. In terms of biological role, responsible for synthesis of pseudouridine from uracil-55 in the psi GC loop of transfer RNAs. This is tRNA pseudouridine synthase B from Staphylococcus aureus (strain Newman).